A 648-amino-acid chain; its full sequence is Bifunctional lysine-specific demethylase and histidyl-hydroxylase NO66 (648 aa).

The segment at Met1–Lys168 is disordered. The segment covering Pro17–Pro28 has biased composition (low complexity). Positions Asp109 to Lys119 are enriched in basic residues. Over residues Gly123 to Leu137 the composition is skewed to polar residues. The span at Pro155–Lys168 shows a compositional bias: basic residues. One can recognise a JmjC domain in the interval Cys308–Ala453. Residues His354, Asp356, and His419 each contribute to the Fe cation site.

It belongs to the ROX family. NO66 subfamily. It depends on Fe(2+) as a cofactor.

Its subcellular location is the nucleus. It catalyses the reaction N(6),N(6)-dimethyl-L-lysyl(36)-[histone H3] + 2 2-oxoglutarate + 2 O2 = L-lysyl(36)-[histone H3] + 2 formaldehyde + 2 succinate + 2 CO2. Functionally, oxygenase that can act as both a histone lysine demethylase and a ribosomal histidine hydroxylase. Specifically demethylates 'Lys-4' (H3K4me) and 'Lys-36' (H3K36me) of histone H3, thereby playing a central role in histone code. The polypeptide is Bifunctional lysine-specific demethylase and histidyl-hydroxylase NO66 (Culex quinquefasciatus (Southern house mosquito)).